We begin with the raw amino-acid sequence, 712 residues long: MARQTPITRYRNIGISAHIDAGKTTTTERILFYTGVSHKIGEVHDGAATMDWMEQEQERGITITSAATTCFWSGMGNQFPQHRINVIDTPGHVDFTIEVERSMRVLDGACMVYCAVGGVQPQSETVWRQANKYKVPRLAFVNKMDRTGANFFRVVEQMKTRLGANPVPIVVPIGAEDTFTGVVDLIEMKAIIWDEASQGMKFEYGEIPADLVDTAQEWRTNMVEAAAEASEELMDKYLEEGDLSKEDIIAGLRARTLASEIQVMLCGSAFKNKGVQRMLDAVIEFLPSPTEVKAIEGILDDKDETKASREASDEAPFSALAFKIMNDKFVGNLTFVRVYSGVLKQGDAVYNPVKSKRERIGRIVQMHANERQDIDEIRAGDIAACVGLKDVTTGDTLCDEKNIITLERMEFPDPVIQLAVEPKTKADQEKMSIALGRLAKEDPSFRVHTDEESGQTIIAGMGELHLDIIVDRMKREFGVEANIGKPMVAYRETIKKTVEQEGKLVRQTGGKGKFGHVYVRLEPLDVEAAGKEYEFAEEVVGGVVPKEFFGAVDKGIQERMKNGVLAGYPVVGVKAVLFDGSYHDVDSDELSFKMAGSYAFRDGFMKADPVLLEPIMKVEVETPEDYMGDIMGDLNRRRGMVQGMDDLPGGTKAIKAEVPLAEMFGYATQMRSMSQGRATYSMEFAKYAETPRNVAEGIIAKFQAGGKKGDDE.

The tr-type G domain occupies 8–290; the sequence is TRYRNIGISA…AVIEFLPSPT (283 aa). GTP is bound by residues 17–24, 88–92, and 142–145; these read AHIDAGKT, DTPGH, and NKMD.

This sequence belongs to the TRAFAC class translation factor GTPase superfamily. Classic translation factor GTPase family. EF-G/EF-2 subfamily.

The protein resides in the cytoplasm. Its function is as follows. Catalyzes the GTP-dependent ribosomal translocation step during translation elongation. During this step, the ribosome changes from the pre-translocational (PRE) to the post-translocational (POST) state as the newly formed A-site-bound peptidyl-tRNA and P-site-bound deacylated tRNA move to the P and E sites, respectively. Catalyzes the coordinated movement of the two tRNA molecules, the mRNA and conformational changes in the ribosome. The polypeptide is Elongation factor G (Acinetobacter baumannii (strain AB307-0294)).